A 370-amino-acid chain; its full sequence is MRSGYTLPVFACAGAIAALHWLRQRQSIQVALVDLIEPAQIAEVPIEQVAGLSANMALAITRSDPGDNLDLTKNTPIWAVVEWGKTGGEQVTIKGGEGIGKQVNADNQAAIYSYAQRLLQANLTRLLAPEESIIVTIILPEGRSLAVRTSNSAFGVVEGLSLLGTTGISQPLSSPDQLDAFRSELQHKASLYESLVFCIGENGLDLARKIGINAEKLVKTANWLGPMLVEADALGVKEILLFGYHGKLMKLAGGIFHTHHHLADGRREVLATHCALAGLSKQDIEIVFHSPTAEAALKHLKALDISTGNDWVNQVYSAIAETIDSRCQEYMQSHSSRGTAATICGSILFDRDRKIIVKSKTACNLMGNLC.

The protein belongs to the CbiD family.

The enzyme catalyses Co-precorrin-5B + S-adenosyl-L-methionine = Co-precorrin-6A + S-adenosyl-L-homocysteine. It functions in the pathway cofactor biosynthesis; adenosylcobalamin biosynthesis; cob(II)yrinate a,c-diamide from sirohydrochlorin (anaerobic route): step 6/10. Functionally, catalyzes the methylation of C-1 in cobalt-precorrin-5B to form cobalt-precorrin-6A. The protein is Cobalt-precorrin-5B C(1)-methyltransferase of Nostoc sp. (strain PCC 7120 / SAG 25.82 / UTEX 2576).